Consider the following 450-residue polypeptide: Tubulin alpha-3 chain (450 aa).

The GTP site is built by Gln-11, Glu-71, Gly-144, Thr-145, Thr-179, Asn-206, and Asn-228. Mg(2+) is bound at residue Glu-71. Glu-254 is an active-site residue.

The protein belongs to the tubulin family. Dimer of alpha and beta chains. A typical microtubule is a hollow water-filled tube with an outer diameter of 25 nm and an inner diameter of 15 nM. Alpha-beta heterodimers associate head-to-tail to form protofilaments running lengthwise along the microtubule wall with the beta-tubulin subunit facing the microtubule plus end conferring a structural polarity. Microtubules usually have 13 protofilaments but different protofilament numbers can be found in some organisms and specialized cells. Mg(2+) serves as cofactor. Undergoes a tyrosination/detyrosination cycle, the cyclic removal and re-addition of a C-terminal tyrosine residue by the enzymes tubulin tyrosine carboxypeptidase (TTCP) and tubulin tyrosine ligase (TTL), respectively.

The protein localises to the cytoplasm. The protein resides in the cytoskeleton. The enzyme catalyses GTP + H2O = GDP + phosphate + H(+). Functionally, tubulin is the major constituent of microtubules, a cylinder consisting of laterally associated linear protofilaments composed of alpha- and beta-tubulin heterodimers. Microtubules grow by the addition of GTP-tubulin dimers to the microtubule end, where a stabilizing cap forms. Below the cap, tubulin dimers are in GDP-bound state, owing to GTPase activity of alpha-tubulin. This is Tubulin alpha-3 chain (TUBA3) from Eleusine indica (Goosegrass).